A 226-amino-acid polypeptide reads, in one-letter code: Myosin regulatory light chain 10 (226 aa).

EF-hand domains follow at residues 84–119, 154–189, and 190–225; these read NSPA…LGRI, DPEE…QADR, and FSEE…GEEK. Ca(2+) contacts are provided by Asp97, Asn99, Asp101, and Asp108.

Myosin is a hexamer of 2 heavy chains and 4 light chains.

The protein is Myosin regulatory light chain 10 (MYL10) of Homo sapiens (Human).